The following is a 451-amino-acid chain: Endosomal transmembrane epsin interactor 1 (451 aa).

An N-terminal signal peptide occupies residues 1–29; it reads MILLVNLFVLLSVVCILLNLAGFILGCQG. The Lumenal segment spans residues 30–85; it reads AQFVSSVPRCDLVDLGEGKICFCCEEFQPAKCTDKENALKLFPVQPCSAVHLLLKK. Residues 86-106 traverse the membrane as a helical segment; that stretch reads VLFALCALNALTTTVCLVAAA. Topologically, residues 107 to 451 are cytoplasmic; sequence LRYLQIFASR…LIGVIRETVL (345 aa). A mediates interaction with EPN1 region spans residues 107-451; that stretch reads LRYLQIFASR…LIGVIRETVL (345 aa). 2 consecutive short sequence motifs (PPxY; mediates interaction with ITCH) follow at residues 148 to 151 and 194 to 197; these read PPSY and PPPY. Residues 204 to 213 are compositionally biased toward polar residues; it reads TDQEQESSFQ. A disordered region spans residues 204–224; that stretch reads TDQEQESSFQMPEGPETAASP. Lys274 participates in a covalent cross-link: Glycyl lysine isopeptide (Lys-Gly) (interchain with G-Cter in ubiquitin). Ser275 is modified (phosphoserine). A Glycyl lysine isopeptide (Lys-Gly) (interchain with G-Cter in ubiquitin) cross-link involves residue Lys365.

The protein belongs to the ENTREP family. As to quaternary structure, interacts with ITCH; enhances the ubiquitination of CXCR4 by ITCH and the subsequent endocytosis and desensitization of the receptor. Interacts with EPN1.

It localises to the early endosome membrane. Its subcellular location is the late endosome membrane. The protein resides in the recycling endosome membrane. It is found in the cell membrane. In terms of biological role, functions as an activator of the E3 ubiquitin protein ligase ITCH in the ubiquitination of the CXCL12-activated CXCR4 receptor. Thereby, triggers CXCR4 endocytosis and desensitization, negatively regulating the CXCL12/CXCR4 signaling pathway. The polypeptide is Endosomal transmembrane epsin interactor 1 (Mus musculus (Mouse)).